The sequence spans 310 residues: Methionyl-tRNA formyltransferase (310 aa).

A (6S)-5,6,7,8-tetrahydrofolate-binding site is contributed by 109 to 112 (SLLP).

It belongs to the Fmt family.

It catalyses the reaction L-methionyl-tRNA(fMet) + (6R)-10-formyltetrahydrofolate = N-formyl-L-methionyl-tRNA(fMet) + (6S)-5,6,7,8-tetrahydrofolate + H(+). Functionally, attaches a formyl group to the free amino group of methionyl-tRNA(fMet). The formyl group appears to play a dual role in the initiator identity of N-formylmethionyl-tRNA by promoting its recognition by IF2 and preventing the misappropriation of this tRNA by the elongation apparatus. In Pseudomonas putida (strain W619), this protein is Methionyl-tRNA formyltransferase.